Consider the following 308-residue polypeptide: N-acetylneuraminate lyase (308 aa).

Positions 50 and 51 each coordinate aceneuramate. The active-site Proton donor is Tyr-142. The active-site Schiff-base intermediate with substrate is Lys-172. The aceneuramate site is built by Ser-174, Gly-198, Asp-200, Glu-201, and Ser-217.

Belongs to the DapA family. NanA subfamily. In terms of assembly, homotetramer.

It is found in the cytoplasm. It carries out the reaction aceneuramate = aldehydo-N-acetyl-D-mannosamine + pyruvate. It functions in the pathway amino-sugar metabolism; N-acetylneuraminate degradation. Catalyzes the cleavage of N-acetylneuraminic acid (sialic acid) to form pyruvate and N-acetylmannosamine via a Schiff base intermediate. It prevents sialic acids from being recycled and returning to the cell surface. Involved in the N-glycolylneuraminic acid (Neu5Gc) degradation pathway. This chain is N-acetylneuraminate lyase, found in Gallus gallus (Chicken).